The chain runs to 737 residues: Photosystem I P700 chlorophyll a apoprotein A2 (737 aa).

A run of 8 helical transmembrane segments spans residues 46-69 (LFST…FHIA), 135-158 (LYQG…LHLQ), 175-199 (LNHH…HVAI), 273-291 (IAHH…GHMY), 333-356 (LHFQ…QHMY), 372-398 (AALY…IFFI), 420-442 (AIIS…LYVH), and 520-538 (FLVH…LILV). [4Fe-4S] cluster-binding residues include Cys562 and Cys571. Helical transmembrane passes span 578–599 (AFYL…YWHW) and 646–668 (LAVW…MFLI). Chlorophyll a-binding residues include His657, Met665, and Tyr673. Trp674 lines the phylloquinone pocket. Residues 710-730 (VVGLAHFSVGYVLTYAAFLIA) traverse the membrane as a helical segment.

The protein belongs to the PsaA/PsaB family. As to quaternary structure, the PsaA/B heterodimer binds the P700 chlorophyll special pair and subsequent electron acceptors. PSI consists of a core antenna complex that captures photons, and an electron transfer chain that converts photonic excitation into a charge separation. The cyanobacterial PSI reaction center is composed of one copy each of PsaA,B,C,D,E,F,I,J,K,L,M and X, and forms trimeric complexes. Requires PSI electron transfer chain: 5 chlorophyll a, 1 chlorophyll a', 2 phylloquinones and 3 4Fe-4S clusters. PSI core antenna: 90 chlorophyll a, 22 carotenoids, 3 phospholipids and 1 galactolipid. P700 is a chlorophyll a/chlorophyll a' dimer, A0 is one or more chlorophyll a, A1 is one or both phylloquinones and FX is a shared 4Fe-4S iron-sulfur center. as cofactor.

The protein resides in the cellular thylakoid membrane. The catalysed reaction is reduced [plastocyanin] + hnu + oxidized [2Fe-2S]-[ferredoxin] = oxidized [plastocyanin] + reduced [2Fe-2S]-[ferredoxin]. Functionally, psaA and PsaB bind P700, the primary electron donor of photosystem I (PSI), as well as the electron acceptors A0, A1 and FX. PSI is a plastocyanin/cytochrome c6-ferredoxin oxidoreductase, converting photonic excitation into a charge separation, which transfers an electron from the donor P700 chlorophyll pair to the spectroscopically characterized acceptors A0, A1, FX, FA and FB in turn. Oxidized P700 is reduced on the lumenal side of the thylakoid membrane by plastocyanin or cytochrome c6. This is Photosystem I P700 chlorophyll a apoprotein A2 from Parasynechococcus marenigrum (strain WH8102).